Reading from the N-terminus, the 279-residue chain is Polyamine aminopropyltransferase (279 aa).

A PABS domain is found at 4 to 237 (IEWYPRGYGV…SPWAFLVGIK (234 aa)). Q29 lines the S-methyl-5'-thioadenosine pocket. Spermidine-binding residues include H60 and D84. S-methyl-5'-thioadenosine contacts are provided by residues E104 and 141–142 (DG). D158 functions as the Proton acceptor in the catalytic mechanism. 158–161 (DSTD) serves as a coordination point for spermidine. Position 165 (P165) interacts with S-methyl-5'-thioadenosine.

It belongs to the spermidine/spermine synthase family. Homodimer or homotetramer.

It is found in the cytoplasm. The enzyme catalyses S-adenosyl 3-(methylsulfanyl)propylamine + putrescine = S-methyl-5'-thioadenosine + spermidine + H(+). It functions in the pathway amine and polyamine biosynthesis; spermidine biosynthesis; spermidine from putrescine: step 1/1. Functionally, catalyzes the irreversible transfer of a propylamine group from the amino donor S-adenosylmethioninamine (decarboxy-AdoMet) to putrescine (1,4-diaminobutane) to yield spermidine. This Pyrococcus abyssi (strain GE5 / Orsay) protein is Polyamine aminopropyltransferase.